Reading from the N-terminus, the 264-residue chain is Synaptophysin-like protein 2 (264 aa).

Residues 1 to 33 (MSSTESPGRTSDKSPRQQVDRLLLGLRWQRLEE) are Cytoplasmic-facing. Residues 30–238 (RLEEPLGFIK…NCWFVFKETP (209 aa)) form the MARVEL domain. Residues 34–54 (PLGFIKVLQWLFAIFAFGSCG) form a helical membrane-spanning segment. Over 55–116 (SYSGETGALV…LMGDFSAPAE (62 aa)) the chain is Vesicular. A helical transmembrane segment spans residues 117-137 (FFVTLGIFSFFYTMAALVIYL). The Cytoplasmic segment spans residues 138-150 (RFHKLYTENKRFP). The helical transmembrane segment at 151-171 (LVDFCVTVSFTFFWLVAAAAW) threads the bilayer. Residues 172 to 213 (GKGLTDVKGATRPSSLTAAMSVCHGEEAVCSAGATPSMGLAN) lie on the Vesicular side of the membrane. A glycan (N-linked (GlcNAc...) asparagine) is linked at asparagine 213. A helical membrane pass occupies residues 214–234 (LSVLFGFINFFLWAGNCWFVF). Topologically, residues 235-264 (KETPWHGQGQDQGQGPSQESAAEQGAVEKQ) are cytoplasmic. The interval 242–264 (QGQDQGQGPSQESAAEQGAVEKQ) is disordered.

The protein belongs to the synaptophysin/synaptobrevin family. As to expression, expressed abundantly in skeletal muscle and at lower levels in the kidney.

It localises to the membrane. Functionally, involved in communication between the T-tubular and junctional sarcoplasmic reticulum (SR) membranes. This chain is Synaptophysin-like protein 2 (Sypl2), found in Mus musculus (Mouse).